The chain runs to 303 residues: GTPase Era (303 aa).

Residues 9 to 176 (KSGFVSIIGR…VEQIVEHMEE (168 aa)) form the Era-type G domain. The interval 17-24 (GRPNVGKS) is G1. Position 17–24 (17–24 (GRPNVGKS)) interacts with GTP. Positions 43-47 (QTTRN) are G2. Residues 64 to 67 (DTPG) form a G3 region. Residues 64–68 (DTPGI) and 126–129 (NKID) contribute to the GTP site. Residues 126–129 (NKID) form a G4 region. A G5 region spans residues 155–157 (ISA). Residues 199-284 (IREKVLHLTK…YLELWVKVQK (86 aa)) enclose the KH type-2 domain.

It belongs to the TRAFAC class TrmE-Era-EngA-EngB-Septin-like GTPase superfamily. Era GTPase family. Monomer.

It is found in the cytoplasm. Its subcellular location is the cell membrane. An essential GTPase that binds both GDP and GTP, with rapid nucleotide exchange. Plays a role in 16S rRNA processing and 30S ribosomal subunit biogenesis and possibly also in cell cycle regulation and energy metabolism. The protein is GTPase Era of Shouchella clausii (strain KSM-K16) (Alkalihalobacillus clausii).